The chain runs to 245 residues: tRNA (guanine-N(1)-)-methyltransferase (245 aa).

Residues glycine 111 and methionine 131–leucine 136 each bind S-adenosyl-L-methionine.

Belongs to the RNA methyltransferase TrmD family. In terms of assembly, homodimer.

The protein resides in the cytoplasm. It carries out the reaction guanosine(37) in tRNA + S-adenosyl-L-methionine = N(1)-methylguanosine(37) in tRNA + S-adenosyl-L-homocysteine + H(+). Functionally, specifically methylates guanosine-37 in various tRNAs. The sequence is that of tRNA (guanine-N(1)-)-methyltransferase from Staphylococcus epidermidis (strain ATCC 12228 / FDA PCI 1200).